Here is a 152-residue protein sequence, read N- to C-terminus: UPF0225 protein YchJ (152 aa).

This sequence belongs to the UPF0225 family.

This Shigella dysenteriae serotype 1 (strain Sd197) protein is UPF0225 protein YchJ.